Reading from the N-terminus, the 275-residue chain is MAIVKVKPTSPGRRAMVKVVNKDLHKGKPFAPLLDSQSTTAGRNNNGHITTRHKGGGHKHHYRVVDFRRNKDGIAAKVERLEYDPNRSANIALVLYADGERRYIIAPKGVTVGQQLMSGSEAPIRAGNTLPIRNIPVGTTIHCIEMLPGKGAQMARSAGTSAMLLAREGIYAQVRLRSGEIRRVHVECRATIGEVGNEEHSLRQIGKAGANRWRGIRPTVRGVAMNPVDHPHGGGEGKTAAGRDPVSPWGTPTKGYRTRSNKRTTSMIVQRRHKR.

Disordered stretches follow at residues 28 to 59 and 224 to 275; these read KPFA…GGHK and AMNP…RHKR. The segment covering 35–49 has biased composition (polar residues); the sequence is DSQSTTAGRNNNGHI. The span at 50–59 shows a compositional bias: basic residues; sequence TTRHKGGGHK.

It belongs to the universal ribosomal protein uL2 family. In terms of assembly, part of the 50S ribosomal subunit. Forms a bridge to the 30S subunit in the 70S ribosome.

Functionally, one of the primary rRNA binding proteins. Required for association of the 30S and 50S subunits to form the 70S ribosome, for tRNA binding and peptide bond formation. It has been suggested to have peptidyltransferase activity; this is somewhat controversial. Makes several contacts with the 16S rRNA in the 70S ribosome. The protein is Large ribosomal subunit protein uL2 of Paraburkholderia xenovorans (strain LB400).